The chain runs to 118 residues: Large ribosomal subunit protein uL24 (118 aa).

Belongs to the universal ribosomal protein uL24 family. Part of the 50S ribosomal subunit.

In terms of biological role, one of two assembly initiator proteins, it binds directly to the 5'-end of the 23S rRNA, where it nucleates assembly of the 50S subunit. One of the proteins that surrounds the polypeptide exit tunnel on the outside of the subunit. The polypeptide is Large ribosomal subunit protein uL24 (Prochlorococcus marinus subsp. pastoris (strain CCMP1986 / NIES-2087 / MED4)).